The sequence spans 500 residues: Maturase K (500 aa).

This sequence belongs to the intron maturase 2 family. MatK subfamily.

It localises to the plastid. The protein resides in the chloroplast. Usually encoded in the trnK tRNA gene intron. Probably assists in splicing its own and other chloroplast group II introns. This chain is Maturase K, found in Prunus laurocerasus (Cherry laurel).